Consider the following 835-residue polypeptide: Microcephalin (835 aa).

Positions 1 to 93 (MAAPILKDVV…AHIDESLFPA (93 aa)) constitute a BRCT 1 domain. Ser-279, Ser-287, Ser-296, and Ser-333 each carry phosphoserine. Disordered regions lie at residues 313-381 (PDQK…RRSI) and 419-443 (DNLKERYSENLPPESQLPSSPAQLS). Thr-335 is subject to Phosphothreonine. The span at 343–361 (LLIHSRPRSSSVKRKRVSH) shows a compositional bias: basic residues. The span at 434 to 443 (QLPSSPAQLS) shows a compositional bias: polar residues. Phosphoserine is present on Ser-548. The interval 555–584 (AVGLKSTQNKGTTSKISNSSEGEAQSEHEP) is disordered. Residues 559–577 (KSTQNKGTTSKISNSSEGE) show a composition bias toward polar residues. BRCT domains follow at residues 640–730 (SGRG…PFEL) and 751–833 (YRGT…NYLL).

As to quaternary structure, interacts with CDC27 and maybe other components of the APC/C complex. Interacts with histone variant H2AX under DNA damage conditions. As to expression, expressed in fetal brain, liver and kidney.

The protein resides in the cytoplasm. It is found in the cytoskeleton. The protein localises to the microtubule organizing center. Its subcellular location is the centrosome. Its function is as follows. Implicated in chromosome condensation and DNA damage induced cellular responses. May play a role in neurogenesis and regulation of the size of the cerebral cortex. The sequence is that of Microcephalin from Homo sapiens (Human).